The following is a 60-amino-acid chain: Ribosome biogenesis protein Nop10 (60 aa).

The tract at residues 37–60 (APAPFDPADPHGKYRRALKERRRL) is disordered. A compositionally biased stretch (basic residues) spans 49-60 (KYRRALKERRRL).

This sequence belongs to the NOP10 family.

In terms of biological role, involved in ribosome biogenesis; more specifically in 18S rRNA pseudouridylation and in cleavage of pre-rRNA. The sequence is that of Ribosome biogenesis protein Nop10 from Halobacterium salinarum (strain ATCC 29341 / DSM 671 / R1).